The chain runs to 237 residues: UPF0688 protein C1orf174 homolog (237 aa).

Residues 1 to 187 (MRSRKLAGGV…LLDDDSNQPM (187 aa)) form a disordered region. The span at 11–28 (RSSARLRARSCSAASASA) shows a compositional bias: low complexity. Residues 29–47 (QDTHVTTSAQTACQTPSSH) are compositionally biased toward polar residues. A compositionally biased stretch (basic and acidic residues) spans 48-76 (KATDRRTSKKFKYDKGHIVKSELQKHRSD). Serine 183 carries the post-translational modification Phosphoserine.

It belongs to the UPF0688 family.

Its subcellular location is the nucleus. The polypeptide is UPF0688 protein C1orf174 homolog (Bos taurus (Bovine)).